Consider the following 94-residue polypeptide: Cytochrome b-c1 complex subunit 8, mitochondrial (94 aa).

Topologically, residues 2–49 are mitochondrial matrix; the sequence is GPPSGKTYMGWWGHMGGPKQKGITSYAVSPYAQKPLQGIFHNAVFNSF. The chain crosses the membrane as a helical span at residues 50-80; that stretch reads RRFKSQFLYVLIPAGIYWYWWKNGNEYNEFL. Over 81-94 the chain is Mitochondrial intermembrane; the sequence is YSKAGREELERVNV.

This sequence belongs to the UQCRQ/QCR8 family. In terms of assembly, component of the ubiquinol-cytochrome c oxidoreductase (cytochrome b-c1 complex, complex III, CIII), a multisubunit enzyme composed of 10 subunits. The complex is composed of 3 respiratory subunits cytochrome b (COB), cytochrome c1 (CYT1) and Rieske protein (RIP1), 2 core protein subunits COR1 and QCR2, and 5 low-molecular weight protein subunits QCR6, QCR7, QCR8, QCR9 and QCR10. The complex exists as an obligatory dimer and forms supercomplexes (SCs) in the inner mitochondrial membrane with a monomer or a dimer of cytochrome c oxidase (complex IV, CIV), resulting in 2 different assemblies (supercomplexes III(2)IV and III(2)IV(2)).

The protein localises to the mitochondrion inner membrane. In terms of biological role, component of the ubiquinol-cytochrome c oxidoreductase, a multisubunit transmembrane complex that is part of the mitochondrial electron transport chain which drives oxidative phosphorylation. The respiratory chain contains 3 multisubunit complexes succinate dehydrogenase (complex II, CII), ubiquinol-cytochrome c oxidoreductase (cytochrome b-c1 complex, complex III, CIII) and cytochrome c oxidase (complex IV, CIV), that cooperate to transfer electrons derived from NADH and succinate to molecular oxygen, creating an electrochemical gradient over the inner membrane that drives transmembrane transport and the ATP synthase. The cytochrome b-c1 complex catalyzes electron transfer from ubiquinol to cytochrome c, linking this redox reaction to translocation of protons across the mitochondrial inner membrane, with protons being carried across the membrane as hydrogens on the quinol. In the process called Q cycle, 2 protons are consumed from the matrix, 4 protons are released into the intermembrane space and 2 electrons are passed to cytochrome c. This is Cytochrome b-c1 complex subunit 8, mitochondrial (QCR8) from Saccharomyces cerevisiae (strain ATCC 204508 / S288c) (Baker's yeast).